Consider the following 346-residue polypeptide: Olfactory receptor 8G5 (346 aa).

Residues methionine 1 to leucine 60 are Extracellular-facing. N-linked (GlcNAc...) asparagine glycans are attached at residues asparagine 16 and asparagine 40. Residues proline 61–isoleucine 81 traverse the membrane as a helical segment. At threonine 82–histidine 89 the chain is on the cytoplasmic side. A helical membrane pass occupies residues leucine 90–threonine 110. Topologically, residues valine 111–threonine 134 are extracellular. A disulfide bridge links cysteine 132 with cysteine 214. Residues glutamine 135 to tyrosine 155 form a helical membrane-spanning segment. Over aspartate 156–lysine 174 the chain is Cytoplasmic. The chain crosses the membrane as a helical span at residues alanine 175–isoleucine 195. The Extracellular segment spans residues glycine 196 to leucine 232. A helical transmembrane segment spans residues leucine 233–serine 252. Topologically, residues tyrosine 253–alanine 272 are cytoplasmic. Residues phenylalanine 273–methionine 293 traverse the membrane as a helical segment. Over tyrosine 294–glycine 306 the chain is Extracellular. A helical transmembrane segment spans residues lysine 307–leucine 327. Residues arginine 328–leucine 346 lie on the Cytoplasmic side of the membrane.

It belongs to the G-protein coupled receptor 1 family.

The protein resides in the cell membrane. Functionally, odorant receptor. This Homo sapiens (Human) protein is Olfactory receptor 8G5 (OR8G5).